Consider the following 274-residue polypeptide: Large ribosomal subunit protein uL2 (274 aa).

The tract at residues 221–274 (RGTAMNPVDHPHGGGEGRNFGKHPVTPWGVQTKGKKTRNNKRTDKSIVRRRSKK) is disordered.

Belongs to the universal ribosomal protein uL2 family. Part of the 50S ribosomal subunit. Forms a bridge to the 30S subunit in the 70S ribosome.

In terms of biological role, one of the primary rRNA binding proteins. Required for association of the 30S and 50S subunits to form the 70S ribosome, for tRNA binding and peptide bond formation. It has been suggested to have peptidyltransferase activity; this is somewhat controversial. Makes several contacts with the 16S rRNA in the 70S ribosome. The sequence is that of Large ribosomal subunit protein uL2 from Hamiltonella defensa subsp. Acyrthosiphon pisum (strain 5AT).